A 663-amino-acid polypeptide reads, in one-letter code: DNA ligase (663 aa).

NAD(+) is bound by residues 31-35 (DFEFD), 80-81 (SL), and Glu110. Residue Lys112 is the N6-AMP-lysine intermediate of the active site. Arg133, Glu170, Lys285, and Lys309 together coordinate NAD(+). Cys404, Cys407, Cys422, and Cys428 together coordinate Zn(2+). The BRCT domain occupies 585 to 663 (FIDNKLAGKT…SEDEFLKMIE (79 aa)).

It belongs to the NAD-dependent DNA ligase family. LigA subfamily. Requires Mg(2+) as cofactor. Mn(2+) is required as a cofactor.

It catalyses the reaction NAD(+) + (deoxyribonucleotide)n-3'-hydroxyl + 5'-phospho-(deoxyribonucleotide)m = (deoxyribonucleotide)n+m + AMP + beta-nicotinamide D-nucleotide.. DNA ligase that catalyzes the formation of phosphodiester linkages between 5'-phosphoryl and 3'-hydroxyl groups in double-stranded DNA using NAD as a coenzyme and as the energy source for the reaction. It is essential for DNA replication and repair of damaged DNA. This is DNA ligase from Azobacteroides pseudotrichonymphae genomovar. CFP2.